Reading from the N-terminus, the 258-residue chain is Acetylglutamate kinase (258 aa).

Substrate is bound by residues 44–45, arginine 66, and asparagine 158; that span reads GG. Residues 181–186 and 209–211 contribute to the ATP site; these read DVSGIL and IIT.

It belongs to the acetylglutamate kinase family. ArgB subfamily. Homodimer.

The protein resides in the cytoplasm. The catalysed reaction is N-acetyl-L-glutamate + ATP = N-acetyl-L-glutamyl 5-phosphate + ADP. It functions in the pathway amino-acid biosynthesis; L-arginine biosynthesis; N(2)-acetyl-L-ornithine from L-glutamate: step 2/4. Catalyzes the ATP-dependent phosphorylation of N-acetyl-L-glutamate. The chain is Acetylglutamate kinase from Salmonella arizonae (strain ATCC BAA-731 / CDC346-86 / RSK2980).